The chain runs to 277 residues: Release factor glutamine methyltransferase (277 aa).

S-adenosyl-L-methionine is bound by residues 117–121 (GTGTG), D140, W168, and N183. 183-186 (NPPY) serves as a coordination point for substrate.

It belongs to the protein N5-glutamine methyltransferase family. PrmC subfamily.

It catalyses the reaction L-glutaminyl-[peptide chain release factor] + S-adenosyl-L-methionine = N(5)-methyl-L-glutaminyl-[peptide chain release factor] + S-adenosyl-L-homocysteine + H(+). Methylates the class 1 translation termination release factors RF1/PrfA and RF2/PrfB on the glutamine residue of the universally conserved GGQ motif. The polypeptide is Release factor glutamine methyltransferase (Shigella dysenteriae serotype 1 (strain Sd197)).